The sequence spans 185 residues: Thymidine kinase (185 aa).

ATP is bound at residue 17–24; it reads GPMFAGKT. Catalysis depends on glutamate 92, which acts as the Proton acceptor. Phenylalanine 121 lines the substrate pocket. 2 residues coordinate Zn(2+): cysteine 146 and cysteine 149. Position 166–170 (166–170) interacts with substrate; the sequence is LILAG. Positions 179 and 182 each coordinate Zn(2+).

It belongs to the thymidine kinase family.

The catalysed reaction is thymidine + ATP = dTMP + ADP + H(+). Phosphorylates thymidine. ASFV replicates in the cytoplasm of infected cells and contains genes encoding a number of enzymes needed for DNA synthesis, including thymidine kinase. Important for growth in swine macrophages in vitro and is a virus virulence factor in swine. In African swine fever virus (isolate Pig/Kenya/KEN-50/1950) (ASFV), this protein is Thymidine kinase.